We begin with the raw amino-acid sequence, 87 residues long: MKVTIKSIWNTVSAWHWDVNEECCGICRMAFDGCCVDCKIPGDDCPPVWGVCNHAFHMHCILKWLNANELQQCPMCRSEWRFKSDEK.

Residues 35 to 77 (CVDCKIPGDDCPPVWGVCNHAFHMHCILKWLNANELQQCPMCR) form an RING-type; atypical zinc finger.

This sequence belongs to the RING-box family. As to quaternary structure, the APC/C is composed of at least 13 subunits that stay tightly associated throughout the cell cycle: anapc1, anapc2, anapc3, anapc4, anapc5, anapc6, anapc7, anapc8, anapc10, anapc11, cdc20, cdc26 and cdh1.

Its subcellular location is the nucleus. It functions in the pathway protein modification; protein ubiquitination. Functionally, component of the anaphase promoting complex/cyclosome (APC/C), a cell cycle-regulated E3 ubiquitin-protein ligase complex that controls progression through mitosis and the G1 phase of the cell cycle. In Dictyostelium discoideum (Social amoeba), this protein is Anaphase-promoting complex subunit 11 (anapc11).